Here is a 485-residue protein sequence, read N- to C-terminus: Glutamyl-tRNA(Gln) amidotransferase subunit A (485 aa).

Catalysis depends on charge relay system residues K76 and S151. The active-site Acyl-ester intermediate is S175.

This sequence belongs to the amidase family. GatA subfamily. Heterotrimer of A, B and C subunits.

It carries out the reaction L-glutamyl-tRNA(Gln) + L-glutamine + ATP + H2O = L-glutaminyl-tRNA(Gln) + L-glutamate + ADP + phosphate + H(+). Allows the formation of correctly charged Gln-tRNA(Gln) through the transamidation of misacylated Glu-tRNA(Gln) in organisms which lack glutaminyl-tRNA synthetase. The reaction takes place in the presence of glutamine and ATP through an activated gamma-phospho-Glu-tRNA(Gln). The polypeptide is Glutamyl-tRNA(Gln) amidotransferase subunit A (Thiobacillus denitrificans (strain ATCC 25259 / T1)).